A 395-amino-acid polypeptide reads, in one-letter code: Elongation factor Tu (395 aa).

A tr-type G domain is found at 10–204 (KPHLNIGTIG…TVDNYIKEPI (195 aa)). Residues 19–26 (GHVDHGKT) are G1. 19–26 (GHVDHGKT) is a binding site for GTP. A Mg(2+)-binding site is contributed by Thr26. A G2 region spans residues 60-64 (GITIN). A G3 region spans residues 81-84 (DCPG). Residues 81–85 (DCPGH) and 136–139 (NKVD) each bind GTP. A G4 region spans residues 136-139 (NKVD). The tract at residues 174-176 (SAL) is G5.

It belongs to the TRAFAC class translation factor GTPase superfamily. Classic translation factor GTPase family. EF-Tu/EF-1A subfamily. In terms of assembly, monomer.

The protein localises to the cytoplasm. It catalyses the reaction GTP + H2O = GDP + phosphate + H(+). Functionally, GTP hydrolase that promotes the GTP-dependent binding of aminoacyl-tRNA to the A-site of ribosomes during protein biosynthesis. This Karelsulcia muelleri (strain GWSS) (Sulcia muelleri) protein is Elongation factor Tu.